A 158-amino-acid chain; its full sequence is MKERYGTVYKGSQRLIDEESGEVIEVDKLYRKQTSGNFVKAYIVQLISMLDMIGGKKLKIVNYILDNVHLSNNTMIATTREIAKATGTSLQTVITTLKILEEGNIIKRKTGVLMLNPELLMRGDDQKQKYLLLEFGNFEQEANEKQENALSDYYSFKD.

The chain is Replication and maintenance protein (repL) from Staphylococcus aureus.